A 184-amino-acid chain; its full sequence is Large ribosomal subunit protein uL15 (184 aa).

Residues 1 to 55 are disordered; the sequence is MDLSSLSPAKGSVKNKKRVGRGQGSGNGTTAGKGNKGQQSRSGYKRPVSEGGQMP. Residues 21-35 show a composition bias toward gly residues; it reads RGQGSGNGTTAGKGN.

This sequence belongs to the universal ribosomal protein uL15 family. As to quaternary structure, part of the 50S ribosomal subunit.

Its function is as follows. Binds to the 23S rRNA. The chain is Large ribosomal subunit protein uL15 from Prosthecochloris aestuarii (strain DSM 271 / SK 413).